A 105-amino-acid polypeptide reads, in one-letter code: MSWIILVIAGLLEVVWAVGLKYTHGFSRLTPSVITVTAMIVSMALLAWAMKSLPVGTAYAVWTGIGAVGAAITGIVLLGESANPMRLASLALIVLGIIGLKLSTH.

The chain crosses the membrane as a helical span at residues 1–21; it reads MSWIILVIAGLLEVVWAVGLK. Over 22-28 the chain is Cytoplasmic; the sequence is YTHGFSR. The chain crosses the membrane as a helical span at residues 29–49; sequence LTPSVITVTAMIVSMALLAWA. Topologically, residues 50–57 are periplasmic; sequence MKSLPVGT. Residues 58–78 form a helical membrane-spanning segment; sequence AYAVWTGIGAVGAAITGIVLL. Topologically, residues 79–81 are cytoplasmic; that stretch reads GES. Residues 82 to 102 form a helical membrane-spanning segment; that stretch reads ANPMRLASLALIVLGIIGLKL. Over 103–105 the chain is Periplasmic; the sequence is STH.

This sequence belongs to the drug/metabolite transporter (DMT) superfamily. Small multidrug resistance (SMR) (TC 2.A.7.1) family. Gdx/SugE subfamily.

It is found in the cell inner membrane. Its function is as follows. Guanidinium ion exporter. Couples guanidinium export to the proton motive force, exchanging one guanidinium ion for two protons. This Escherichia coli O157:H7 protein is Guanidinium exporter.